The chain runs to 201 residues: NADH-quinone oxidoreductase subunit C (201 aa).

This sequence belongs to the complex I 30 kDa subunit family. As to quaternary structure, NDH-1 is composed of 14 different subunits. Subunits NuoB, C, D, E, F, and G constitute the peripheral sector of the complex.

It is found in the cell inner membrane. The catalysed reaction is a quinone + NADH + 5 H(+)(in) = a quinol + NAD(+) + 4 H(+)(out). NDH-1 shuttles electrons from NADH, via FMN and iron-sulfur (Fe-S) centers, to quinones in the respiratory chain. The immediate electron acceptor for the enzyme in this species is believed to be ubiquinone. Couples the redox reaction to proton translocation (for every two electrons transferred, four hydrogen ions are translocated across the cytoplasmic membrane), and thus conserves the redox energy in a proton gradient. This Mesorhizobium japonicum (strain LMG 29417 / CECT 9101 / MAFF 303099) (Mesorhizobium loti (strain MAFF 303099)) protein is NADH-quinone oxidoreductase subunit C.